Here is a 114-residue protein sequence, read N- to C-terminus: MKYQILFGVVFLTLLSYCYSEIEDEFENFVDEEMVEADDPFSLARKDKENCIPKHHECTSDRHGCCRGSMFKYKCQCVKIVNAQKEETERCACITPGLHKAAEFVVQLFKKVIA.

A signal peptide spans 1–20 (MKYQILFGVVFLTLLSYCYS). The propeptide occupies 21–45 (EIEDEFENFVDEEMVEADDPFSLAR). Cystine bridges form between Cys51-Cys66, Cys65-Cys93, and Cys77-Cys91.

The protein belongs to the neurotoxin 19 (CSTX) family. 04 (U1-Lctx) subfamily. As to expression, expressed by the venom gland.

The protein resides in the secreted. The sequence is that of U5-lycotoxin-Ls1a from Lycosa singoriensis (Wolf spider).